The primary structure comprises 271 residues: Protein PXR1 (271 aa).

Residues 25 to 72 (TSRFGHQFLEKFGWKPGMGLGLYPMNSNTSHIKVSIKDDNVGLGAKLK) form the G-patch domain. The interval 147–239 (SNAKKRKREG…SASNIPDAVN (93 aa)) is disordered. Positions 157-168 (DDSEDEDDDDKE) are enriched in acidic residues. A compositionally biased stretch (basic residues) spans 175–203 (KKHKKHKKHKKDKKKDKKDKKEHKKHKKE). The segment covering 204–221 (EKRLKKEKRAEKTKETKK) has biased composition (basic and acidic residues). The residue at position 230 (Ser230) is a Phosphoserine.

It belongs to the PINX1 family. As to quaternary structure, interacts with EST2.

The protein localises to the nucleus. It is found in the nucleolus. Its function is as follows. Involved in rRNA-processing at A0, A1 and A2 sites through its action in U18 and U24 snoRNA 3'-end final trimming. Negative regulator of telomerase throughX competition for binding to EST2 with TLC1. This chain is Protein PXR1 (PXR1), found in Saccharomyces cerevisiae (strain YJM789) (Baker's yeast).